The sequence spans 161 residues: uncharacterized protein (161 aa).

Residues 72 to 134 (CAICLDNLQN…EAQQTCPTCR (63 aa)) form an RING-type zinc finger. A disordered region spans residues 140-161 (DKEVEEEERQRNLEELHDSMYG).

This is an uncharacterized protein from Caenorhabditis elegans.